Reading from the N-terminus, the 94-residue chain is RNA-binding protein Hfq (94 aa).

One can recognise a Sm domain in the interval 9–68 (DPFLNALRRERVPVSIYLVNGIKLQGQVESFDQFVILLKNTVSQMVYKHAISTVVPARPF). The segment at 70–94 (VSAHHSSPAPTPAGGFNGQNDETSE) is disordered.

It belongs to the Hfq family. Homohexamer.

Functionally, RNA chaperone that binds small regulatory RNA (sRNAs) and mRNAs to facilitate mRNA translational regulation in response to envelope stress, environmental stress and changes in metabolite concentrations. Also binds with high specificity to tRNAs. This chain is RNA-binding protein Hfq, found in Shewanella woodyi (strain ATCC 51908 / MS32).